Reading from the N-terminus, the 598-residue chain is (-)-endo-fenchol synthase, chloroplastic (598 aa).

The N-terminal 34 residues, 1-34, are a transit peptide targeting the chloroplast; the sequence is MWSTISISMNVAILKKPLNFLHNSNNKASNPRCV. Residues D351, D355, D495, T499, and E503 each coordinate Mg(2+). The DDXXD motif signature appears at 351 to 355; the sequence is DDVYD.

The protein belongs to the terpene synthase family. The cofactor is Mg(2+). Mn(2+) is required as a cofactor.

It is found in the plastid. The protein resides in the chloroplast. The enzyme catalyses (2E)-geranyl diphosphate + H2O = (1S,2S,4R)-endo-fenchol + diphosphate. Its pathway is secondary metabolite biosynthesis; terpenoid biosynthesis. In terms of biological role, monoterpene synthase that catalyzes the formation of fenchol from geranyl diphosphate. This Ocimum basilicum (Sweet basil) protein is (-)-endo-fenchol synthase, chloroplastic (FES).